The sequence spans 133 residues: Large-conductance mechanosensitive channel (133 aa).

2 helical membrane-spanning segments follow: residues 10–30 (FAMKGNVLDMAVGVVIGTAFG) and 76–96 (GNFIQTAVDFLIIAFCIFCVI).

This sequence belongs to the MscL family. As to quaternary structure, homopentamer.

It localises to the cell inner membrane. Channel that opens in response to stretch forces in the membrane lipid bilayer. May participate in the regulation of osmotic pressure changes within the cell. In Campylobacter curvus (strain 525.92), this protein is Large-conductance mechanosensitive channel.